Consider the following 614-residue polypeptide: BPI fold-containing family B member 4 (614 aa).

The signal sequence occupies residues 1–18 (MWMAWCVAALSVVAVCGT). The N-linked (GlcNAc...) asparagine glycan is linked to Asn-273. A disulfide bridge links Cys-295 with Cys-332.

Belongs to the BPI/LBP/Plunc superfamily. BPI/LBP family. Expressed in nasal tissue.

The protein localises to the secreted. It localises to the cytoplasm. May have the capacity to recognize and bind specific classes of odorants. May act as a carrier molecule, transporting odorants across the mucus layer to access receptor sites. May serve as a primary defense mechanism by recognizing and removing potentially harmful odorants or pathogenic microorganisms from the mucosa or clearing excess odorant from mucus to enable new odorant stimuli to be received. The sequence is that of BPI fold-containing family B member 4 (BPIFB4) from Homo sapiens (Human).